A 332-amino-acid polypeptide reads, in one-letter code: dTDP-3,4-didehydro-2,6-dideoxy-alpha-D-glucose 3-reductase (332 aa).

C17–R23 contributes to the NADP(+) binding site. Position 24 (R24) interacts with substrate. NADP(+)-binding positions include S42–R43, Y63, L79, and H84. Residue K102 is the Proton donor of the active site. Positions 170 and 182 each coordinate NADP(+). The substrate site is built by Y240 and T260.

This sequence belongs to the Gfo/Idh/MocA family. As to quaternary structure, homotetramer; dimer of dimers.

The catalysed reaction is dTDP-4-dehydro-2,6-dideoxy-alpha-D-glucose + NADP(+) = dTDP-3,4-didehydro-2,6-dideoxy-alpha-D-glucose + NADPH + H(+). It functions in the pathway antibiotic biosynthesis. Functionally, involved in the biosynthesis of L-digitoxose, an unusual dideoxysugar attached to various pharmacologically active natural products, including the antitumor antibiotic tetrocarcin A, and the antibiotics kijanimicin and jadomycin B. Catalyzes the reduction of the C-3 keto moiety of dTDP-3,4-diketo-2,6-dideoxy-alpha-D-glucose to yield dTDP-4-keto-2,6-dideoxy-alpha-D-glucose. Also able to reduce dTDP-3-keto-6-deoxy-D-galactose and dTDP-3-keto-6-deoxy-D-glucose to yield dTDP-fucose and dTDP-quinovose, respectively. This is dTDP-3,4-didehydro-2,6-dideoxy-alpha-D-glucose 3-reductase from Actinomadura kijaniata.